A 709-amino-acid chain; its full sequence is Anillin-like protein 3 (709 aa).

Residues Asp584 to Asp705 enclose the PH domain.

This chain is Anillin-like protein 3 (ani-3), found in Caenorhabditis elegans.